A 521-amino-acid chain; its full sequence is Zinc finger and BTB domain-containing protein 18 (521 aa).

Residues 24-91 (CDCTVLVGDA…MYEGKLQFKD (68 aa)) enclose the BTB domain. The disordered stretch occupies residues 190–230 (DSASIPQTGGEAETHTAAAGKTADSPCSSTGSLSHRSATSM). Residues 197 to 212 (TGGEAETHTAAAGKTA) are compositionally biased toward low complexity. A compositionally biased stretch (polar residues) spans 214–230 (SPCSSTGSLSHRSATSM). 4 C2H2-type zinc fingers span residues 369–391 (FMCP…LSTH), 409–431 (PTCS…ERTH), 437–459 (FTCT…AVVH), and 465–488 (HACK…RKFH).

Belongs to the krueppel C2H2-type zinc-finger protein family. ZBTB18 subfamily.

Its subcellular location is the nucleus. Its function is as follows. Transcriptional repressor that plays a role in various developmental processes. Specifically binds the consensus DNA sequence 5'-[AC]ACATCTG[GT][AC]-3' which contains the E box core, and acts by recruiting chromatin remodeling multiprotein complexes. The polypeptide is Zinc finger and BTB domain-containing protein 18 (zbtb18) (Xenopus tropicalis (Western clawed frog)).